The sequence spans 290 residues: UPF0761 membrane protein YihY (290 aa).

6 helical membrane-spanning segments follow: residues 44 to 64 (LLSLVPLIAVVFALFAAFPMF), 104 to 124 (VGACGLIVTALLLMYAIDSAL), 140 to 160 (FAVYWMILTLGPLLAGASLAI), 183 to 203 (ILPLLLSWISFWLLYSIVPTT), 210 to 230 (ALVGAFVAALLFEAGKKGFAL), and 244 to 264 (VLAVIPILFVWVYWTWCIVLL).

It belongs to the UPF0761 family.

The protein localises to the cell inner membrane. The sequence is that of UPF0761 membrane protein YihY from Salmonella agona (strain SL483).